Consider the following 171-residue polypeptide: NADH-quinone oxidoreductase subunit I (171 aa).

4Fe-4S ferredoxin-type domains follow at residues 63-92 (RRYENGEERCIACKLCEAVCPALAITIESD) and 102-131 (TRYDIDLTKCIFCGFCEESCPVDSIVETQI). Positions 72, 75, 78, 82, 111, 114, 117, and 121 each coordinate [4Fe-4S] cluster.

The protein belongs to the complex I 23 kDa subunit family. As to quaternary structure, NDH-1 is composed of 14 different subunits. Subunits NuoA, H, J, K, L, M, N constitute the membrane sector of the complex. Requires [4Fe-4S] cluster as cofactor.

The protein localises to the cell inner membrane. It carries out the reaction a quinone + NADH + 5 H(+)(in) = a quinol + NAD(+) + 4 H(+)(out). Functionally, NDH-1 shuttles electrons from NADH, via FMN and iron-sulfur (Fe-S) centers, to quinones in the respiratory chain. The immediate electron acceptor for the enzyme in this species is believed to be ubiquinone. Couples the redox reaction to proton translocation (for every two electrons transferred, four hydrogen ions are translocated across the cytoplasmic membrane), and thus conserves the redox energy in a proton gradient. This Paracidovorax citrulli (strain AAC00-1) (Acidovorax citrulli) protein is NADH-quinone oxidoreductase subunit I.